We begin with the raw amino-acid sequence, 169 residues long: Transcription antitermination protein NusB (169 aa).

The segment at 147–169 (RGLIDQSFSRPQKPESEATEIEE) is disordered.

The protein belongs to the NusB family.

Involved in transcription antitermination. Required for transcription of ribosomal RNA (rRNA) genes. Binds specifically to the boxA antiterminator sequence of the ribosomal RNA (rrn) operons. The protein is Transcription antitermination protein NusB of Chlorobium chlorochromatii (strain CaD3).